Reading from the N-terminus, the 282-residue chain is Protein DOG1-like 3 (282 aa).

One can recognise a DOG1 domain in the interval 11–254 (EQLQKGCYYE…HEWGRVREEQ (244 aa)).

In Arabidopsis thaliana (Mouse-ear cress), this protein is Protein DOG1-like 3.